We begin with the raw amino-acid sequence, 409 residues long: MLISNVGINPAAYLNNHSVENSSQTASQSVSAKDILNSIGISSSKVSDLGLSPTLSAPAPGVLTQTPGTITSFLKASIQNTDMNQDLNALANNVTTKANEVVQTQLREQQAEVGKFFDISGMSSSAVALLAAANTLMLTLNQADSKLSGKLSLVSFDAAKTTASSMMREGMNALSGSISQSALQLGITGVGAKLEYKGLQNERGALKHNAAKIDKLTTESHSIKNVLNGQNSVKLGAEGVDSLKSLNMKKTGTDATKNLNDATLKSNAGTSATESLGIKDSNKQISPEHQAILSKRLESVESDIRLEQNTMDMTRIDARKMQMTGDLIMKNSVTVGGIAGASGQYAATQERSEQQISQVNNRVASTASDEARESSRKSTSLIQEMLKTMESINQSKASALAAIAGNIRA.

Residues 119 to 140 (ISGMSSSAVALLAAANTLMLTL) form a helical membrane-spanning segment.

This sequence belongs to the SctB/SipC family. As to quaternary structure, the core secretion machinery of the T3SS is composed of approximately 20 different proteins, including cytoplasmic components, a base, an export apparatus and a needle. This subunit is involved in the formation of a pore, called the translocon, in host membrane.

It is found in the secreted. Its subcellular location is the host membrane. Functionally, component of the type III secretion system 1 (SPI-1 T3SS), also called injectisome, which is used to inject bacterial effector proteins into eukaryotic host cells. SipB/SctE1 and SipC/SctB1 are inserted into the host membrane where they form a pore and allow the translocation of effector proteins into the cytosol of target cells. The polypeptide is SPI-1 type 3 secretion system translocon protein SctB (Salmonella typhimurium (strain 14028s / SGSC 2262)).